The sequence spans 333 residues: Serine/threonine-protein phosphatase 4 catalytic subunit 1 (333 aa).

Residues 1–28 (MALACTDSANSTFSRVDSPTSGPSDQLT) are disordered. A compositionally biased stretch (polar residues) spans 7 to 27 (DSANSTFSRVDSPTSGPSDQL). Asp-79, His-81, Asp-107, and Asn-139 together coordinate Mn(2+). Catalysis depends on His-140, which acts as the Proton donor. His-189 and His-264 together coordinate Mn(2+). Leu-333 is subject to Leucine methyl ester.

Belongs to the PPP phosphatase family. PP-4 (PP-X) subfamily. As to quaternary structure, serine/threonine-protein phosphatase 4 (PP4) occurs in different assemblies of the catalytic and one or more regulatory subunits. The regulatory subunits are likely to be ppfr-1, ppfr-2, ppfr-4 and smk-1. Interacts with mei-1. Requires Mn(2+) as cofactor. In terms of processing, methylation at the C-terminal Leu-333 is critical for interactions with regulatory subunits.

It is found in the cytoplasm. The protein resides in the cytoskeleton. The protein localises to the microtubule organizing center. Its subcellular location is the centrosome. It catalyses the reaction O-phospho-L-seryl-[protein] + H2O = L-seryl-[protein] + phosphate. The enzyme catalyses O-phospho-L-threonyl-[protein] + H2O = L-threonyl-[protein] + phosphate. In terms of biological role, protein phosphatase which plays an essential role in meiosis and in early embryonic mitosis. During spermatocyte meiosis and the first embryonic mitosis, regulates centrosome maturation, and thus spindle formation, by recruiting some of the components of the pericentriolar material (PCM). During oocyte meiosis I, regulates meiotic chromosome dynamics including synapsis-independent chromosome pairing, restriction of synapsis to homologous chromosomes, programmed DNA double-strand break initiation and crossover formation resulting in chiasma formation. During oocyte meiosis II and probably together with regulatory subunit ppfr-1, may regulate microtubule severing by dephosphorylating and activating mei-1, a component of the katanin microtubule severing complex. In Caenorhabditis elegans, this protein is Serine/threonine-protein phosphatase 4 catalytic subunit 1.